Reading from the N-terminus, the 312-residue chain is Putative mitochondrial transporter UCP3 (312 aa).

The Mitochondrial intermembrane segment spans residues 1 to 10 (MVGLKPSDVP). A helical transmembrane segment spans residues 11–32 (PTMAVKFLGAGTAACFADLVTF). Solcar repeat units follow at residues 11 to 105 (PTMA…VKQV), 114 to 206 (SSLT…LKEK), and 215 to 300 (DNFP…LKRA). Residues 33–76 (PLDTAKVRLQIQGENQAVQTARLVQYRGVLGTILTMVRTEGPCS) lie on the Mitochondrial matrix side of the membrane. The helical transmembrane segment at 77-99 (PYNGLVAGLQRQMSFASIRIGLY) threads the bilayer. The Mitochondrial intermembrane portion of the chain corresponds to 100–119 (DSVKQVYTPKGADNSSLTTR). A helical transmembrane segment spans residues 120–136 (ILAGCTTGAMAVTCAQP). Over 137 to 183 (TDVVKVRFQASIHLGPSRSDRKYSGTMDAYRTIAREEGVRGLWKGTL) the chain is Mitochondrial matrix. A helical transmembrane segment spans residues 184 to 200 (PNIMRNAIVNCAEVVTY). Residues 201-217 (DILKEKLLDYHLLTDNF) are Mitochondrial intermembrane-facing. A helical transmembrane segment spans residues 218–237 (PCHFVSAFGAGFCATVVASP). At 238–271 (VDVVKTRYMNSPPGQYFSPLDCMIKMVAQEGPTA) the chain is on the mitochondrial matrix side. A helical membrane pass occupies residues 272-294 (FYKGFTPSFLRLGSWNVVMFVTY). Positions 279–301 (SFLRLGSWNVVMFVTYEQLKRAL) are purine nucleotide binding. The Mitochondrial intermembrane segment spans residues 295-312 (EQLKRALMKVQMLRESPF).

The protein belongs to the mitochondrial carrier (TC 2.A.29) family. In terms of assembly, interacts with HAX1; the interaction is direct and calcium-dependent. As to expression, only in skeletal muscle and heart. Also expressed in white and brown adipose tissues. Is more expressed in glycolytic than in oxidative skeletal muscles.

The protein resides in the mitochondrion inner membrane. Its activity is regulated as follows. The proton transporter activity is activated by fatty acids (in vitro). The proton transporter activity is inhibited by ATP and ADP (in vitro). The effect of Ubiquinone/coenzyme Q10 on the proton transporter activity in reconstituted membranes is unclear (in vitro). Putative transmembrane transporter that plays a role in mitochondrial metabolism via an as yet unclear mechanism. Originally, this mitochondrial protein was thought to act as a proton transmembrane transporter from the mitochondrial intermembrane space into the matrix, causing proton leaks through the inner mitochondrial membrane, thereby uncoupling mitochondrial membrane potential generation from ATP synthesis. However, this function is controversial and uncoupling may not be the function, or at least not the main function, but rather a consequence of more conventional metabolite transporter activity. The chain is Putative mitochondrial transporter UCP3 from Homo sapiens (Human).